The following is a 96-amino-acid chain: MNLRPLHDRVIVKRLDNETKTASGIVIPDAAAEKPDQGEVLAIGPGKKDDKGNPIALDVKVGDRVLFGKYAGQAVKVDGQELLVMREEDIMAVVTK.

It belongs to the GroES chaperonin family. Heptamer of 7 subunits arranged in a ring. Interacts with the chaperonin GroEL.

The protein resides in the cytoplasm. Together with the chaperonin GroEL, plays an essential role in assisting protein folding. The GroEL-GroES system forms a nano-cage that allows encapsulation of the non-native substrate proteins and provides a physical environment optimized to promote and accelerate protein folding. GroES binds to the apical surface of the GroEL ring, thereby capping the opening of the GroEL channel. This chain is Co-chaperonin GroES, found in Ralstonia nicotianae (strain ATCC BAA-1114 / GMI1000) (Ralstonia solanacearum).